A 31-amino-acid polypeptide reads, in one-letter code: MAPPSIFAEVPQAQPVLVFKLTADFREDPDP.

Belongs to the class-I pyridoxal-phosphate-dependent aminotransferase family. Homodimer. The cofactor is pyridoxal 5'-phosphate.

Its subcellular location is the cytoplasm. It carries out the reaction L-aspartate + 2-oxoglutarate = oxaloacetate + L-glutamate. The enzyme catalyses L-cysteine + 2-oxoglutarate = 2-oxo-3-sulfanylpropanoate + L-glutamate. It catalyses the reaction (2S)-2-aminobutanoate + 2-oxoglutarate = 2-oxobutanoate + L-glutamate. The catalysed reaction is 3-sulfino-L-alanine + 2-oxoglutarate = 3-sulfinopyruvate + L-glutamate. Its function is as follows. Biosynthesis of L-glutamate from L-aspartate or L-cysteine. Important regulator of levels of glutamate, the major excitatory neurotransmitter of the vertebrate central nervous system. Acts as a scavenger of glutamate in brain neuroprotection. The aspartate aminotransferase activity is involved in hepatic glucose synthesis during development and in adipocyte glyceroneogenesis. Using L-cysteine as substrate, regulates levels of mercaptopyruvate, an important source of hydrogen sulfide. Mercaptopyruvate is converted into H(2)S via the action of 3-mercaptopyruvate sulfurtransferase (3MST). Hydrogen sulfide is an important synaptic modulator and neuroprotectant in the brain. In Oryctolagus cuniculus (Rabbit), this protein is Aspartate aminotransferase, cytoplasmic.